Here is a 598-residue protein sequence, read N- to C-terminus: NADH-quinone oxidoreductase subunit C/D (598 aa).

The tract at residues 1 to 188 (MTDSTTHDAL…DPFVLTKQKE (188 aa)) is NADH dehydrogenase I subunit C. Positions 212–598 (DFMFLNLGPN…IDFVMSDVDR (387 aa)) are NADH dehydrogenase I subunit D.

In the N-terminal section; belongs to the complex I 30 kDa subunit family. The protein in the C-terminal section; belongs to the complex I 49 kDa subunit family. In terms of assembly, NDH-1 is composed of 13 different subunits. Subunits NuoB, CD, E, F, and G constitute the peripheral sector of the complex.

The protein localises to the cell inner membrane. It catalyses the reaction a quinone + NADH + 5 H(+)(in) = a quinol + NAD(+) + 4 H(+)(out). Its function is as follows. NDH-1 shuttles electrons from NADH, via FMN and iron-sulfur (Fe-S) centers, to quinones in the respiratory chain. The immediate electron acceptor for the enzyme in this species is believed to be ubiquinone. Couples the redox reaction to proton translocation (for every two electrons transferred, four hydrogen ions are translocated across the cytoplasmic membrane), and thus conserves the redox energy in a proton gradient. This Serratia proteamaculans (strain 568) protein is NADH-quinone oxidoreductase subunit C/D.